Reading from the N-terminus, the 490-residue chain is Transmembrane protease serine 2 (490 aa).

The Cytoplasmic portion of the chain corresponds to 1-83 (MALNSGSPPG…ALCTSKSKKS (83 aa)). The helical; Signal-anchor for type II membrane protein transmembrane segment at 84 to 104 (LCLALALGTVLTGAAVAAVLL) threads the bilayer. At 105-490 (WRFWDSNCST…WIYQQMRANS (386 aa)) the chain is on the extracellular side. N-linked (GlcNAc...) asparagine glycosylation is present at asparagine 111. Positions 111–149 (NCSTSEMECGSSGTCISSSLWCDGVAHCPNGEDENRCVR) constitute an LDL-receptor class A domain. 9 cysteine pairs are disulfide-bonded: cysteine 112–cysteine 125, cysteine 119–cysteine 138, cysteine 132–cysteine 147, cysteine 171–cysteine 230, cysteine 184–cysteine 240, cysteine 243–cysteine 363, cysteine 279–cysteine 295, cysteine 408–cysteine 424, and cysteine 435–cysteine 463. Residues aspartate 133, valine 135, aspartate 143, and glutamate 144 each coordinate Ca(2+). The SRCR domain occupies 150-242 (LYGQSFILQV…RMVVSLRCIE (93 aa)). Residue asparagine 212 is glycosylated (N-linked (GlcNAc...) asparagine). Residues 254–487 (IVGGLNASPG…FTDWIYQQMR (234 aa)) enclose the Peptidase S1 domain. Residues histidine 294 and aspartate 343 each act as charge relay system in the active site. Residue serine 439 is the Charge relay system of the active site. A glycan (N-linked (GlcNAc...) asparagine) is linked at asparagine 474.

This sequence belongs to the peptidase S1 family. The catalytically active form interacts with ACE2. Proteolytically processed; by an autocatalytic mechanism. Autocleavage induces active conformation. Larynx, trachea and bronchi, lung, prostate and kidney.

Its subcellular location is the cell membrane. It is found in the secreted. The enzyme catalyses The enzyme cleaves angiotensin-converting enzyme 2 (EC 3.4.17.23) and cleaves influenzea A and B virus and coronavirus spike glycoproteins at arginine residues.. In terms of biological role, plasma membrane-anchored serine protease that cleaves at arginine residues. Participates in proteolytic cascades of relevance for the normal physiologic function of the prostate. Androgen-induced TMPRSS2 activates several substrates that include pro-hepatocyte growth factor/HGF, the protease activated receptor-2/F2RL1 or matriptase/ST14 leading to extracellular matrix disruption. In addition, activates trigeminal neurons and contribute to both spontaneous pain and mechanical allodynia. Functionally, (Microbial infection) Essential for spread and pathogenesis of influenza A virus (strains H1N1, H3N2 and H7N9) and is involved in proteolytic cleavage and activation of hemagglutinin (HA) protein which is essential for viral infectivity. The chain is Transmembrane protease serine 2 (Tmprss2) from Mus musculus (Mouse).